A 290-amino-acid polypeptide reads, in one-letter code: Glutamyl-Q tRNA(Asp) synthetase (290 aa).

Residues 9-13 (RFAPS) and Glu-45 each bind L-glutamate. The short motif at 12-22 (PSPSGSLHFGS) is the 'HIGH' region element. Positions 101, 103, 115, and 119 each coordinate Zn(2+). 2 residues coordinate L-glutamate: Tyr-170 and Arg-188. The 'KMSKS' region motif lies at 226 to 230 (KLSKQ). Residue Lys-229 participates in ATP binding.

The protein belongs to the class-I aminoacyl-tRNA synthetase family. GluQ subfamily. Requires Zn(2+) as cofactor.

Catalyzes the tRNA-independent activation of glutamate in presence of ATP and the subsequent transfer of glutamate onto a tRNA(Asp). Glutamate is transferred on the 2-amino-5-(4,5-dihydroxy-2-cyclopenten-1-yl) moiety of the queuosine in the wobble position of the QUC anticodon. This Shewanella amazonensis (strain ATCC BAA-1098 / SB2B) protein is Glutamyl-Q tRNA(Asp) synthetase.